The chain runs to 275 residues: uncharacterized protein (275 aa).

This is an uncharacterized protein from Enterobacteria phage T4 (Bacteriophage T4).